Here is a 499-residue protein sequence, read N- to C-terminus: L-asparagine permease (499 aa).

12 helical membrane passes run 34-54 (QVQM…GAGA), 58-78 (MAGP…FFIL), 109-129 (VAGW…ITAV), 146-166 (VFAL…VKWF), 171-191 (FWFA…GTVF), 219-239 (LLPA…IEMV), 264-284 (IGLF…WSAY), 298-318 (LGVP…ALSS), 353-373 (YAGI…NYLV), 378-398 (FEIV…FIIV), 422-442 (APFT…LMAF), and 448-468 (TYTI…WFGV).

The protein belongs to the amino acid-polyamine-organocation (APC) superfamily. Amino acid transporter (AAT) (TC 2.A.3.1) family.

Its subcellular location is the cell inner membrane. This chain is L-asparagine permease (ansP), found in Escherichia coli (strain K12).